Here is a 214-residue protein sequence, read N- to C-terminus: MTKLFEPAGCRVDLRTGAMSDATGAYQKRFRDLAGLYADEAAFSAMQETWNDTVVYEVSEFRPNERTGDLIFGVTRMLPGKVGEEYFVTRGHIHKQSDRPEIYYGQKGRGLMLLESPEGEVRVVAVDAQTVCYVPPYWIHRSVNIGGDELVMLFCYPADSGQDYDCIAKAGGMRARIIDDGRGGWKQIDNPNWRMRDAATVAALYGREKKEENA.

Fe cation is bound by residues histidine 92, histidine 94, glutamate 101, and histidine 140.

The protein belongs to the archaeal-type GPI family. In terms of assembly, homodimer. The cofactor is Fe cation.

The protein localises to the cytoplasm. The enzyme catalyses alpha-D-glucose 6-phosphate = beta-D-fructose 6-phosphate. Its pathway is carbohydrate degradation; glycolysis; D-glyceraldehyde 3-phosphate and glycerone phosphate from D-glucose: step 2/4. In Rhizobium meliloti (strain 1021) (Ensifer meliloti), this protein is Putative glucose-6-phosphate isomerase 1 (pgiA1).